The following is a 660-amino-acid chain: Macrolide export ATP-binding/permease protein MacB (660 aa).

Residues 10–248 (LVLENIVRKF…TDSQALYGKQ (239 aa)) enclose the ABC transporter domain. 46–53 (GASGSGKS) provides a ligand contact to ATP. The next 4 helical transmembrane spans lie at 285–305 (FLTM…VALG), 532–552 (ILTL…GIGV), 593–613 (VIGG…FLLF), and 625–645 (SIIL…FSPA).

It belongs to the ABC transporter superfamily. Macrolide exporter (TC 3.A.1.122) family. As to quaternary structure, homodimer.

It localises to the cell inner membrane. Its function is as follows. Non-canonical ABC transporter that contains transmembrane domains (TMD), which form a pore in the inner membrane, and an ATP-binding domain (NBD), which is responsible for energy generation. Confers resistance against macrolides. The polypeptide is Macrolide export ATP-binding/permease protein MacB (Bartonella henselae (strain ATCC 49882 / DSM 28221 / CCUG 30454 / Houston 1) (Rochalimaea henselae)).